The chain runs to 689 residues: Ribonuclease J (689 aa).

Residues 1 to 88 (MTDNNQNNEN…RNYAQEELDS (88 aa)) are disordered. Positions 9–24 (ENHENSSENSKADEMR) are enriched in basic and acidic residues. Over residues 56 to 78 (HHKKEHRPNKKPNNHHKQKHAKT) the composition is skewed to basic residues. 2 positions are modified to N6-acetyllysine: Lys-132 and Lys-138. Residues His-206, His-208, Asp-210, His-211, His-275, and Asp-297 each contribute to the Zn(2+) site. Residues Lys-321, Lys-335, and Lys-395 each carry the N6-acetyllysine modification. A substrate-binding site is contributed by 498–502 (HVSGH). Lys-509 carries the N6-acetyllysine modification. His-524 lines the Zn(2+) pocket. An N6-acetyllysine mark is found at Lys-545, Lys-632, and Lys-647.

Belongs to the metallo-beta-lactamase superfamily. RNA-metabolizing metallo-beta-lactamase-like family. Bacterial RNase J subfamily. In terms of assembly, homodimer. Homotetramer; dimer of homodimers. Interacts with RNA helicase RhpA, might be a member of a minimal RNA degradosome complex. It depends on Zn(2+) as a cofactor. In terms of processing, acetylated on nine lysine residues. Some of the residues are acetylated by multiple different mechanisms. RimL is partially responsible for the acetylation of Lys-321, Lys-395 and Lys-647. HPB8_1270 homolog is partially responsible for the acetylation of Lys-321, Lys-395, Lys-509 and Lys-647. Acetyl-phosphate-mediated non-enzymatic acetylation pathway takes part in the acetylation of Lys-132, Lys-321, Lys-395, Lys-509 and Lys-647. Acetylation of the remaining residues Lys-138, Lys-335, Lys-545 and Lys-632 occurs by a yet undetermined mechanism. Acetylation on a number of these residues is important for growth regulation and proper cell morphology.

The protein resides in the cytoplasm. Its activity is regulated as follows. Catalytic activity is regulated by the balance between homodimers and homotetramers, with homotetramers being the active forms of this enzyme. Acetylation allosterically regulates the homooligomerization state and hence the catalytic activity. Functionally, an RNase that has 5'-3' exoribonuclease and endoribonuclease activity. Degrades 5'-monophosphorylated ssRNA and dsRNA, considerably more active on ssRNA. Association with RhpA significantly increases the dsRNase activity. Degrades RNA substrate with hairpin structures at both ends with low activity, but presence of RhpA significantly increases the activity on this substrate. Stimulates ATPase activity of RNA helicase RhpA. Involved in stabilization of mRNA but apparently not rRNA. The polypeptide is Ribonuclease J (Helicobacter pylori (strain ATCC 700392 / 26695) (Campylobacter pylori)).